Here is a 355-residue protein sequence, read N- to C-terminus: Ataxin-3-like protein (355 aa).

Positions 1–180 (MDFIFHEKQE…DCEADQLLQI (180 aa)) constitute a Josephin domain. Catalysis depends on cysteine 14, which acts as the Nucleophile. Residue histidine 119 is the Proton acceptor of the active site. Residue asparagine 134 is part of the active site. Disordered stretches follow at residues 209-230 (LEKV…EDFQ) and 253-331 (LSMQ…DISE). The span at 215–228 (ESDESGTSDQDEED) shows a compositional bias: acidic residues. UIM domains lie at 224–243 (QDEE…TNRE) and 244–258 (DEHL…MQGS). Over residues 253-276 (LSMQGSSGNTSQDLPKTSCVTPAS) the composition is skewed to polar residues. Residues 278 to 293 (QPKKIKEDYFEKHQQE) show a composition bias toward basic and acidic residues.

As to expression, widely expressed.

It localises to the nucleus. The catalysed reaction is Thiol-dependent hydrolysis of ester, thioester, amide, peptide and isopeptide bonds formed by the C-terminal Gly of ubiquitin (a 76-residue protein attached to proteins as an intracellular targeting signal).. Functionally, deubiquitinating enzyme that cleaves both 'Lys-48'-linked and 'Lys-63'-linked poly-ubiquitin chains (in vitro). Acts as a deubiquitinating enzyme for the transcription factor KLF5, playing a role in the regulation of KLF5 stability. The polypeptide is Ataxin-3-like protein (Homo sapiens (Human)).